The chain runs to 248 residues: Granulin (248 aa).

The protein belongs to the polyhedrin family.

Its function is as follows. Component of the virus occlusion bodies, which are large proteinaceous structures, that protect the virus from the outside environment for extended periods until they are ingested by insect larvae. The sequence is that of Granulin from Adoxophyes orana granulovirus (AoGV).